The following is a 388-amino-acid chain: Protein-glutamate methylesterase/protein-glutamine glutaminase 4 (388 aa).

In terms of domain architecture, Response regulatory spans Lys-4–Leu-121. Position 55 is a 4-aspartylphosphate (Asp-55). Residues Ser-137–Thr-196 are disordered. The span at Pro-148–Ala-164 shows a compositional bias: pro residues. One can recognise a CheB-type methylesterase domain in the interval Pro-197–Gly-388. Active-site residues include Ser-209, His-236, and Asp-332.

The protein belongs to the CheB family. In terms of processing, phosphorylated by CheA. Phosphorylation of the N-terminal regulatory domain activates the methylesterase activity.

The protein localises to the cytoplasm. The enzyme catalyses [protein]-L-glutamate 5-O-methyl ester + H2O = L-glutamyl-[protein] + methanol + H(+). It carries out the reaction L-glutaminyl-[protein] + H2O = L-glutamyl-[protein] + NH4(+). Functionally, involved in chemotaxis. Part of a chemotaxis signal transduction system that modulates chemotaxis in response to various stimuli. Catalyzes the demethylation of specific methylglutamate residues introduced into the chemoreceptors (methyl-accepting chemotaxis proteins or MCP) by CheR. Also mediates the irreversible deamidation of specific glutamine residues to glutamic acid. The protein is Protein-glutamate methylesterase/protein-glutamine glutaminase 4 of Hahella chejuensis (strain KCTC 2396).